The following is a 235-amino-acid chain: MSKTSKAYRAAAAKVDRTNLYTPLQAAKLAKETSSTKQDATVEVAIRLGVDPRKADQMVRGTVNLPHGTGKTARVAVFAVGEKADAAVAAGADVVGSDDLIERIQGGWLEFDAAIATPDQMAKVGRIARVLGPRGLMPNPKTGTVTADVAKAVADIKGGKINFRVDKQANLHFVIGKASFDEKLLAENYGAAIDEVLRLKPSSSKGRYLKKITVSTTTGPGIPVDPSITRNFAGE.

This sequence belongs to the universal ribosomal protein uL1 family. As to quaternary structure, part of the 50S ribosomal subunit.

Binds directly to 23S rRNA. The L1 stalk is quite mobile in the ribosome, and is involved in E site tRNA release. Functionally, protein L1 is also a translational repressor protein, it controls the translation of the L11 operon by binding to its mRNA. In Mycobacterium tuberculosis (strain ATCC 25177 / H37Ra), this protein is Large ribosomal subunit protein uL1.